We begin with the raw amino-acid sequence, 252 residues long: uncharacterized protein (252 aa).

Tandem repeats lie at residues 68-82, 83-97, 98-112, 113-127, 128-142, 143-157, 158-172, 173-187, 188-202, and 203-217. Residues 68–246 form a 13 X 15 AA tandem repeats region; the sequence is TYNQSQNVCP…LIDTYNQSQN (179 aa). Residues 218-230 form an 11; truncated repeat; sequence TYNQSQNVCPQDL. The 12; truncated repeat unit spans residues 231–239; sequence NVYTQDLID. A 13; truncated repeat occupies 240-246; sequence TYNQSQN.

Its function is as follows. A protein probably derived from this gene is found in cuboidal crystalline inclusions, but is not toxic even when coexpressed with upstream ORF1. The protein runs anomalously as a 50 kDa band in gels. This is an uncharacterized protein from Bacillus thuringiensis subsp. kurstaki.